Consider the following 820-residue polypeptide: Leucine--tRNA ligase (820 aa).

The short motif at 42–52 (PYPSGDLHMGH) is the 'HIGH' region element. The 'KMSKS' region motif lies at 576 to 580 (KMSKS). K579 contributes to the ATP binding site.

This sequence belongs to the class-I aminoacyl-tRNA synthetase family.

Its subcellular location is the cytoplasm. The enzyme catalyses tRNA(Leu) + L-leucine + ATP = L-leucyl-tRNA(Leu) + AMP + diphosphate. In Coxiella burnetii (strain Dugway 5J108-111), this protein is Leucine--tRNA ligase.